The primary structure comprises 712 residues: TIR domain-containing adapter molecule 1 (712 aa).

The TRIF-NTD stretch occupies residues 1–153 (MACTGPSLPS…CGWDIAGDPG (153 aa)). Residues 84–91 (EDPEEPPD) carry the TRAF6-binding motif. Residues 207 to 210 (LEIS) carry the pLxIS motif motif. A Phosphoserine; by TBK1 modification is found at serine 210. Disordered stretches follow at residues 216–316 (PFLS…SLPL) and 336–384 (LSVE…LFPS). Residue lysine 229 forms a Glycyl lysine isopeptide (Lys-Gly) (interchain with G-Cter in ubiquitin) linkage. The short motif at 248 to 255 (QEPEEMSW) is the TRAF6-binding element. Residues 265-275 (PELPSSPPPGL) are compositionally biased toward pro residues. Positions 299-309 (NYPVECTEGSA) match the TRAF6-binding motif. Residues 347 to 369 (KPCPPTPTTPETSPPPPPPPPSS) show a composition bias toward pro residues. One can recognise a TIR domain in the interval 393 to 553 (KFYNFVILHA…QDTRALREQS (161 aa)). Positions 512–712 (RLDEHSQIFA…APEDKTQEAE (201 aa)) are sufficient to induce apoptosis. 2 stretches are compositionally biased toward pro residues: residues 620–633 (PFPTWPGCPQPPPL) and 640–649 (TPPPPSPQPA). A disordered region spans residues 620–677 (PFPTWPGCPQPPPLHAWQAGTPPPPSPQPAAFPQSLPFPQSPAFPTASPAPPQSPGLQ). A compositionally biased stretch (low complexity) spans 650 to 666 (AFPQSLPFPQSPAFPTA).

In terms of assembly, homodimer. Found in a multi-helicase-TICAM1 complex at least composed of DHX36, DDX1, DDX21 and TICAM1; this complex exists in resting cells with or without poly(I:C) RNA ligand stimulation. Interacts (via TIR domain) with DDX21 (via C-terminus). Interacts (via TIR domain) with DHX36 (via C-terminus). Interacts with AZI2 and IRF7. Interacts with TICAM2 in TLR4 recruitment. Interaction with PIAS4 inhibits the TICAM1-induced NF-kappa-B, IRF and IFNB1 activation. Interacts with IKBKB and IKBKE. Interaction with SARM1 blocks TICAM1-dependent transcription factor activation. Interacts with TRAF3. Interacts (when phosphorylated) with IRF3; following activation and phosphorylation on the pLxIS motif by TBK1, recruits IRF3. Interacts with TBK1, TRAF6 and RIPK1 and these interactions are enhanced in the presence of WDFY1. Interacts with TRAFD1. Interacts with UBQLN1 (via UBA domain). Interacts with TLR4. Interacts with WDFY1 in response to poly(I:C). Interacts (via the TIR domain) with TLR3 in response to poly(I:C) and this interaction is enhanced in the presence of WDFY1. Interacts with TRIM56. Component of a multi-helicase-TICAM1 complex that acts as a cytoplasmic sensor of viral double-stranded RNA (dsRNA) and plays a role in the activation of a cascade of antiviral responses including the induction of pro-inflammatory cytokines. Interacts (via the TIR domain) with TLR5. Interacts with TRIM8. Interacts with TAX1BP1 and TRIM32; these interactions target TICAM1 to TAX1BP1-mediated selective autophagic degradation. Interacts with DDX50. As to quaternary structure, (Microbial infection) Interacts with hepatitis C virus (HCV) NS3/4A protease; this interaction leads to TICAM1 cleavage, thereby disrupting TLR3 signaling and preventing the establishment of an antiviral state. (Microbial infection) Interacts with Seneca Valley virus protease 3C; this interaction allows the cleavage of TICAM1/TRIF and subsequent suppression of host innate immunity. In terms of assembly, (Microbial infection) Interacts (via C-terminus) with coxsackievirus B3 (CVB3) protease 3C. Post-translationally, phosphorylated by TBK1. Following activation, phosphorylated by TBK1 at Ser-210 in the pLxIS motif. The phosphorylated pLxIS motif constitutes an IRF3-binding motif, leading to recruitment of the transcription factor IRF3 to induce type-I interferons and other cytokines. In terms of processing, polyubiquitinated at Lys-229 by TRIM38 with 'Lys-48'-linked chains, leading to proteasomal degradation. Polyubiquitinated with 'Lys-6'- and 'Lys-33'-linked chains in a TRIM8-dependent manner; ubiquitination disrupts the interaction with TBK1 and subsequent interferon production. (Microbial infection) Cleaved and degraded by hepatitis A virus (HAV) protein 3CD allowing the virus to disrupt host TLR3 signaling. Post-translationally, (Microbial infection) Cleaved by CVB3 protease 3C allowing the virus to disrupt host TLR3 signaling. In terms of processing, (Microbial infection) Cleaved by Seneca Valley virus protease 3C allowing the virus to disrupt host TLR3 signaling. (Microbial infection) Cleaved by protease 3C of human enterovirus D68 (EV68) allowing the virus to disrupt host TLR3 signaling. Post-translationally, (Microbial infection) Cleaved by HCV protease NS3/4A, thereby disrupting TLR3 signaling and preventing the establishment of an antiviral state. In terms of tissue distribution, ubiquitously expressed but with higher levels in liver.

It localises to the cytoplasmic vesicle. The protein resides in the autophagosome. It is found in the cytoplasm. Its subcellular location is the cytosol. The protein localises to the mitochondrion. Functionally, involved in innate immunity against invading pathogens. Adapter used by TLR3, TLR4 (through TICAM2) and TLR5 to mediate NF-kappa-B and interferon-regulatory factor (IRF) activation, and to induce apoptosis. Ligand binding to these receptors results in TRIF recruitment through its TIR domain. Distinct protein-interaction motifs allow recruitment of the effector proteins TBK1, TRAF6 and RIPK1, which in turn, lead to the activation of transcription factors IRF3 and IRF7, NF-kappa-B and FADD respectively. Phosphorylation by TBK1 on the pLxIS motif leads to recruitment and subsequent activation of the transcription factor IRF3 to induce expression of type I interferon and exert a potent immunity against invading pathogens. Component of a multi-helicase-TICAM1 complex that acts as a cytoplasmic sensor of viral double-stranded RNA (dsRNA) and plays a role in the activation of a cascade of antiviral responses including the induction of pro-inflammatory cytokines. The protein is TIR domain-containing adapter molecule 1 (TICAM1) of Homo sapiens (Human).